A 236-amino-acid polypeptide reads, in one-letter code: uncharacterized protein (236 aa).

The protein localises to the virion. This is an uncharacterized protein from Acanthamoeba polyphaga (Amoeba).